Here is a 669-residue protein sequence, read N- to C-terminus: Bestrophin-3 (669 aa).

Residues 1-31 (MTVTYSSKVANATFFGFHRLLLKWRGSIYKL) lie on the Cytoplasmic side of the membrane. Ca(2+) is bound at residue Ala10. The helical transmembrane segment at 32 to 51 (LYREFIVFAVLYTAISLVYR) threads the bilayer. Residues 52–60 (LLLTGAQKR) are Extracellular-facing. The helical transmembrane segment at 61–82 (YFEKLSIYCDRYAEQIPVTFVL) threads the bilayer. Residues 83 to 237 (GFYVTLVVNR…DWVGIPLVYT (155 aa)) are Cytoplasmic-facing. Residues 238 to 255 (QVVTLAVYTFFFACLIGR) traverse the membrane as a helical segment. The Extracellular segment spans residues 256 to 274 (QFLDPTKGYVGHDLDLYVP). A helical membrane pass occupies residues 275–288 (IFTLLQFFFYAGWL). The Cytoplasmic portion of the chain corresponds to 289 to 669 (KVAEQLINPF…GTPQRPRTWF (381 aa)). Ca(2+) is bound by residues Gln293, Asn296, Asp301, and Asp304. Disordered regions lie at residues 399–496 (LSTH…TKMP), 533–560 (QPSGTEQQVEPSGTPPGDPNPQTTSAST), 591–627 (TSLGNLGPDPVSPRDALLLPDTETPSETNGIHPGAGS), and 646–669 (ILEFNNEHTGESPKGTPQRPRTWF). Over residues 440–451 (NPHRGSPTRKQS) the composition is skewed to basic residues. Low complexity predominate over residues 475-492 (RTSTLQSLSPQSSVRSSP). Polar residues predominate over residues 533 to 543 (QPSGTEQQVEP). The segment covering 646 to 656 (ILEFNNEHTGE) has biased composition (basic and acidic residues).

The protein belongs to the anion channel-forming bestrophin (TC 1.A.46) family. Calcium-sensitive chloride channel subfamily. As to expression, expressed in heart. In terms of tissue distribution, expressed in brain, retina/retinal pigment epithelium (RPE) and skeletal muscle. Expressed in acinar cells of parotid glands. Expressed in lung, kidney and testis.

Its subcellular location is the cell membrane. It carries out the reaction chloride(in) = chloride(out). Functionally, ligand-gated anion channel that allows the movement of chloride monoatomic anions across cell membranes when activated by calcium (Ca2+). Its function is as follows. Does not function as calcium-gated chloride channel. The polypeptide is Bestrophin-3 (Best3) (Mus musculus (Mouse)).